A 436-amino-acid chain; its full sequence is 3-ketoacyl-CoA thiolase (436 aa).

The Acyl-thioester intermediate role is filled by Cys99. Catalysis depends on proton acceptor residues His392 and Cys422.

The protein belongs to the thiolase-like superfamily. Thiolase family. Heterotetramer of two alpha chains (FadJ) and two beta chains (FadI).

It is found in the cytoplasm. The enzyme catalyses an acyl-CoA + acetyl-CoA = a 3-oxoacyl-CoA + CoA. Its pathway is lipid metabolism; fatty acid beta-oxidation. Functionally, catalyzes the final step of fatty acid oxidation in which acetyl-CoA is released and the CoA ester of a fatty acid two carbons shorter is formed. This chain is 3-ketoacyl-CoA thiolase, found in Shewanella baltica (strain OS185).